The chain runs to 195 residues: UPF0215 protein TK2033 (195 aa).

It belongs to the UPF0215 family.

The chain is UPF0215 protein TK2033 from Thermococcus kodakarensis (strain ATCC BAA-918 / JCM 12380 / KOD1) (Pyrococcus kodakaraensis (strain KOD1)).